Here is a 335-residue protein sequence, read N- to C-terminus: MKNLILAIESSCDDSSIAIIDKNTLECKFHKKISQELDHSIYGGVVPELAARLHSEALPKILKQCNEHFKNLCAIAVTNEPGLSVSLLSGISMAKTLASALNLPLIPINHLKGHIYSLFLEEKISLDIGILLVSGGHTMVLYLKDDANLELLASTNDDSFGESFDKVAKMMNLGYPGGVIIENLAKNAKLKNISFNIPLKHSKELAYSFSGLKNAVRLEILKHENLSDDIKAEIAYAFENTACDHIMDKLEKIFNLYKFKNFGVVGGASANLNLRSRLQNLCQKYNANLKLAPLKFCSDNALMIARAAVDAYEKKEFVSIEEDILSPKNKNFSRI.

The Fe cation site is built by histidine 110 and histidine 114. Residues leucine 132–glycine 136, aspartate 165, glycine 178, and asparagine 271 each bind substrate. Aspartate 299 serves as a coordination point for Fe cation.

The protein belongs to the KAE1 / TsaD family. Fe(2+) serves as cofactor.

It is found in the cytoplasm. It carries out the reaction L-threonylcarbamoyladenylate + adenosine(37) in tRNA = N(6)-L-threonylcarbamoyladenosine(37) in tRNA + AMP + H(+). In terms of biological role, required for the formation of a threonylcarbamoyl group on adenosine at position 37 (t(6)A37) in tRNAs that read codons beginning with adenine. Is involved in the transfer of the threonylcarbamoyl moiety of threonylcarbamoyl-AMP (TC-AMP) to the N6 group of A37, together with TsaE and TsaB. TsaD likely plays a direct catalytic role in this reaction. This chain is tRNA N6-adenosine threonylcarbamoyltransferase, found in Campylobacter jejuni subsp. jejuni serotype O:23/36 (strain 81-176).